Consider the following 253-residue polypeptide: uncharacterized protein (253 aa).

6 helical membrane-spanning segments follow: residues 17-37, 46-66, 93-113, 139-159, 172-192, and 222-242; these read MWLLVWICGIIFLLGTGHIIA, IFGFFVAVAFFLLFLSPVFVF, LAASLLYQFVIQLALTAYGIW, MYGLISSLDMSVTVIVFWTVF, AMVLLVAMWLFFDEYIISPLV, and IHLSVLGFPIAIVITFLLLIM.

Its subcellular location is the cell membrane. This is an uncharacterized protein from Bacillus subtilis (strain 168).